We begin with the raw amino-acid sequence, 487 residues long: N-succinylglutamate 5-semialdehyde dehydrogenase (487 aa).

221-226 contacts NAD(+); sequence GSSRTG. Catalysis depends on residues Glu-244 and Cys-278.

It belongs to the aldehyde dehydrogenase family. AstD subfamily.

It carries out the reaction N-succinyl-L-glutamate 5-semialdehyde + NAD(+) + H2O = N-succinyl-L-glutamate + NADH + 2 H(+). It functions in the pathway amino-acid degradation; L-arginine degradation via AST pathway; L-glutamate and succinate from L-arginine: step 4/5. In terms of biological role, catalyzes the NAD-dependent reduction of succinylglutamate semialdehyde into succinylglutamate. This is N-succinylglutamate 5-semialdehyde dehydrogenase from Pseudomonas putida (strain GB-1).